The following is a 658-amino-acid chain: Threonine--tRNA ligase (658 aa).

The region spanning 1–64 is the TGS domain; the sequence is MSFSISLSFP…EQSGQVEIIT (64 aa). The catalytic stretch occupies residues 246-549; it reads DHRRLGREMD…LIENFAGHMP (304 aa). Residues cysteine 343, histidine 394, and histidine 526 each coordinate Zn(2+).

This sequence belongs to the class-II aminoacyl-tRNA synthetase family. As to quaternary structure, homodimer. Zn(2+) serves as cofactor.

The protein localises to the cytoplasm. The enzyme catalyses tRNA(Thr) + L-threonine + ATP = L-threonyl-tRNA(Thr) + AMP + diphosphate + H(+). Its function is as follows. Catalyzes the attachment of threonine to tRNA(Thr) in a two-step reaction: L-threonine is first activated by ATP to form Thr-AMP and then transferred to the acceptor end of tRNA(Thr). Also edits incorrectly charged L-seryl-tRNA(Thr). The sequence is that of Threonine--tRNA ligase from Bartonella bacilliformis (strain ATCC 35685 / KC583 / Herrer 020/F12,63).